We begin with the raw amino-acid sequence, 432 residues long: CLOCK-interacting pacemaker (432 aa).

Disordered stretches follow at residues alanine 71 to methionine 98 and serine 194 to leucine 315. Serine 246 is subject to Phosphoserine. Residues serine 272 to histidine 283 show a composition bias toward polar residues. The stretch at glutamate 364–glutamate 395 forms a coiled coil. A disordered region spans residues leucine 408–valine 432. The segment covering serine 411 to aspartate 424 has biased composition (low complexity).

In terms of assembly, interacts with CLOCK. Forms a ternary complex with the CLOCK-BMAL1 heterodimer. Interacts with CAD and HSPA5. As to expression, expressed in the heart, kidney and liver and shows a circadian oscillation in these tissues with a peak at circadian time 14 hours (at protein level). Expressed in the brain, including the suprachiasmatic nucleus (SCN) of the brain, and in multiple peripheral tissues such as heart, liver and kidney. Exhibits a circadian oscillation in the peripheral tissues with a peak at circadian time 14 hours.

It is found in the nucleus. The protein localises to the cytoplasm. Its subcellular location is the cytosol. Functionally, transcriptional repressor which may act as a negative-feedback regulator of CLOCK-BMAL1 transcriptional activity in the circadian-clock mechanism. May stimulate BMAL1-dependent phosphorylation of CLOCK. However, the physiological relevance of these observations is unsure, since experiments in knockout mice showed that CIPC is not critially required for basic circadian clock. The polypeptide is CLOCK-interacting pacemaker (Cipc) (Mus musculus (Mouse)).